A 274-amino-acid polypeptide reads, in one-letter code: Thymidylate synthase (274 aa).

Arginine 21 contributes to the dUMP binding site. Histidine 51 is a binding site for (6R)-5,10-methylene-5,6,7,8-tetrahydrofolate. 123-124 contributes to the dUMP binding site; it reads RR. Catalysis depends on cysteine 156, which acts as the Nucleophile. DUMP contacts are provided by residues 176-179, asparagine 187, and 217-219; these read RSAD and HIY. Position 179 (aspartate 179) interacts with (6R)-5,10-methylene-5,6,7,8-tetrahydrofolate. Serine 273 serves as a coordination point for (6R)-5,10-methylene-5,6,7,8-tetrahydrofolate.

It belongs to the thymidylate synthase family. Bacterial-type ThyA subfamily. In terms of assembly, homodimer.

Its subcellular location is the cytoplasm. The enzyme catalyses dUMP + (6R)-5,10-methylene-5,6,7,8-tetrahydrofolate = 7,8-dihydrofolate + dTMP. It participates in pyrimidine metabolism; dTTP biosynthesis. Catalyzes the reductive methylation of 2'-deoxyuridine-5'-monophosphate (dUMP) to 2'-deoxythymidine-5'-monophosphate (dTMP) while utilizing 5,10-methylenetetrahydrofolate (mTHF) as the methyl donor and reductant in the reaction, yielding dihydrofolate (DHF) as a by-product. This enzymatic reaction provides an intracellular de novo source of dTMP, an essential precursor for DNA biosynthesis. The chain is Thymidylate synthase from Francisella tularensis subsp. holarctica (strain FTNF002-00 / FTA).